Consider the following 472-residue polypeptide: Ribosomal protein uS12 methylthiotransferase RimO (472 aa).

The MTTase N-terminal domain occupies 33–143; sequence NRIGFVSLGC…VLKHVHKYVP (111 aa). Residues C42, C78, C107, C175, C179, and C182 each coordinate [4Fe-4S] cluster. The Radical SAM core domain maps to 161-398; the sequence is LTPKHYAYLK…MEVQAEISAE (238 aa). Residues 401 to 467 form the TRAM domain; that stretch reads ARFVGRTLDI…EHDLWAEVVD (67 aa).

Belongs to the methylthiotransferase family. RimO subfamily. The cofactor is [4Fe-4S] cluster.

Its subcellular location is the cytoplasm. The catalysed reaction is L-aspartate(89)-[ribosomal protein uS12]-hydrogen + (sulfur carrier)-SH + AH2 + 2 S-adenosyl-L-methionine = 3-methylsulfanyl-L-aspartate(89)-[ribosomal protein uS12]-hydrogen + (sulfur carrier)-H + 5'-deoxyadenosine + L-methionine + A + S-adenosyl-L-homocysteine + 2 H(+). In terms of biological role, catalyzes the methylthiolation of an aspartic acid residue of ribosomal protein uS12. The sequence is that of Ribosomal protein uS12 methylthiotransferase RimO from Shewanella baltica (strain OS185).